Reading from the N-terminus, the 1235-residue chain is DNA polymerase (1235 aa).

The 115-residue stretch at 773–887 folds into the DOD-type homing endonuclease domain; the sequence is LLGYYISSGD…LILLLNSIGV (115 aa).

Belongs to the DNA polymerase type-B family. Post-translationally, this protein undergoes a protein self splicing that involves a post-translational excision of the intervening region (intein) followed by peptide ligation.

The catalysed reaction is DNA(n) + a 2'-deoxyribonucleoside 5'-triphosphate = DNA(n+1) + diphosphate. The chain is DNA polymerase (pol) from Pyrococcus horikoshii (strain ATCC 700860 / DSM 12428 / JCM 9974 / NBRC 100139 / OT-3).